The following is a 573-amino-acid chain: Probable cytochrome c oxidase subunit 1 (573 aa).

A helical transmembrane segment spans residues 40–60 (IGIMYCVACISFFFIGGLLAL). Position 86 (His86) interacts with Fe(II)-heme a. Helical transmembrane passes span 89–109 (IMLL…VLPL), 121–141 (LNAF…AGFI), 170–190 (LWIM…VNMI), 213–233 (IMVT…ALFG), 258–278 (LFWF…FGIV), and 290–310 (IFGY…SVAV). Residues His264 and Tyr268 each contribute to the Cu cation site. A cross-link (1'-histidyl-3'-tyrosine (His-Tyr)) is located at residues 264-268 (HPEVY). 2 residues coordinate Cu cation: His313 and His314. The next 2 membrane-spanning stretches (helical) occupy residues 315-335 (MFAT…LIAV) and 359-379 (MLFS…GVLL). His397 is a binding site for heme a3. 3 helical membrane-spanning segments follow: residues 398 to 418 (FHYV…YFWF), 433 to 453 (LHFW…HWLG), and 476 to 496 (VSTI…WNVF). Residue His399 coordinates Fe(II)-heme a.

This sequence belongs to the heme-copper respiratory oxidase family.

The protein resides in the cell membrane. It catalyses the reaction 4 Fe(II)-[cytochrome c] + O2 + 8 H(+)(in) = 4 Fe(III)-[cytochrome c] + 2 H2O + 4 H(+)(out). It participates in energy metabolism; oxidative phosphorylation. Cytochrome c oxidase is the component of the respiratory chain that catalyzes the reduction of oxygen to water. Subunits 1-3 form the functional core of the enzyme complex. CO I is the catalytic subunit of the enzyme. Electrons originating in cytochrome c are transferred via the copper A center of subunit 2 and heme A of subunit 1 to the bimetallic center formed by heme A3 and copper B. This is Probable cytochrome c oxidase subunit 1 (ctaD) from Mycobacterium bovis (strain ATCC BAA-935 / AF2122/97).